Consider the following 376-residue polypeptide: Putative F-box protein At1g53370 (376 aa).

The region spanning 22–71 is the F-box domain; sequence RNYIDSIPVDLLIDILSRFPPKSIARFYCVSKLWESILRGPDFTELYLTK.

In Arabidopsis thaliana (Mouse-ear cress), this protein is Putative F-box protein At1g53370.